We begin with the raw amino-acid sequence, 271 residues long: Putative F-box protein L165 (271 aa).

The F-box domain occupies 4-49 (ICELFDDVILEIMNLLSDTDKINFMFCCSRFYYFIDLVYYNDIYDY). A disordered region spans residues 251-271 (NIPKIVPKNTHYRNSSKKYRY). Basic residues predominate over residues 260–271 (THYRNSSKKYRY).

The sequence is that of Putative F-box protein L165 from Acanthamoeba polyphaga mimivirus (APMV).